Here is a 239-residue protein sequence, read N- to C-terminus: Leucine rich adaptor protein 1 (239 aa).

LRR repeat units lie at residues 55-83 (LGDK…LVTL) and 93-114 (LLEE…QYSL). A compositionally biased stretch (low complexity) spans 107–116 (LTSSQYSLTG). 2 disordered regions span residues 107-139 (LTSS…TDRL) and 200-219 (KPPG…DESA). A phosphoserine mark is found at S118, S126, S129, and S213.

As to quaternary structure, forms a tripartite complex with CDC42BPA/CDC42BPB and MYO18A acting as an adapter connecting both. Its binding to CDC42BPA/CDC42BPB results in their activation by abolition of their negative autoregulation. Interacts with CDC42BPA and CDC42BPB.

Its subcellular location is the cytoplasm. In terms of biological role, acts as an activator of the canonical NF-kappa-B pathway and drive the production of pro-inflammatory cytokines. Promotes the antigen (Ag)-presenting and priming function of dendritic cells via the canonical NF-kappa-B pathway. In concert with MYO18A and CDC42BPA/CDC42BPB, is involved in modulating lamellar actomyosin retrograde flow that is crucial to cell protrusion and migration. Activates CDC42BPA/CDC42BPB and targets it to actomyosin through its interaction with MYO18A, leading to MYL9/MLC2 phosphorylation and MYH9/MYH10-dependent actomyosin assembly in the lamella. The sequence is that of Leucine rich adaptor protein 1 (LURAP1) from Homo sapiens (Human).